The sequence spans 227 residues: Endo-1,4-beta-xylanase 11A (227 aa).

Positions 1-36 are cleaved as a signal peptide; sequence MVSASSLLLAASAIAGVFSAPAAAPVSENLNVLQER. Residues 37 to 227 enclose the GH11 domain; it reads ALTSSATGTS…SSGSASITVS (191 aa). Residues 112-136 form a necrosis inducing domain region; the sequence is VYGWTTSPLIEYYIVEDFGTYDPSS. Glu-122 (nucleophile) is an active-site residue. Glu-214 serves as the catalytic Proton donor.

Belongs to the glycosyl hydrolase 11 (cellulase G) family.

The protein localises to the secreted. It carries out the reaction Endohydrolysis of (1-&gt;4)-beta-D-xylosidic linkages in xylans.. The protein operates within glycan degradation; xylan degradation. Its activity is regulated as follows. Significantly inhibited by the wheat xylanase inhibiting protein I (XIP-I) and the proteinaceous endoxylanase Triticum aestivum xylanase inhibitors I (TAXI-I), whereas no inhibition is detected with TAXI-II. Its function is as follows. Endo-1,4-beta-xylanase involved in the hydrolysis of xylan, a major structural heterogeneous polysaccharide found in plant biomass representing the second most abundant polysaccharide in the biosphere, after cellulose. Required for plant infection and the appearance of secondary lesions. Is able to induce necrosis on leaves, seedling growth inhibition, induction of a ROS burst, electrolyte leakage, cytoplasm shrinkage, autofluorescence, cell death, and induction of defense genes, and this abilities are independent of the catalytic activity. Only exhibits elicitor activity in certain plants such as tomato, but not in N.benthamiana. This Botryotinia fuckeliana (strain B05.10) (Noble rot fungus) protein is Endo-1,4-beta-xylanase 11A.